The sequence spans 347 residues: Cell division protein FtsQ (347 aa).

Residues 1 to 55 are disordered; it reads MARNGNPQFPDERSTATRAKATEPEELDDRFSDLEPEEDSPFLRSQKRVPVRRGP. The Cytoplasmic segment spans residues 1–66; the sequence is MARNGNPQFP…PSKKAANRVK (66 aa). A compositionally biased stretch (basic and acidic residues) spans 10-33; it reads PDERSTATRAKATEPEELDDRFSD. A helical transmembrane segment spans residues 67 to 87; sequence IALIVLGVLVVIGGVWMALSA. Residues 88–347 lie on the Periplasmic side of the membrane; it reads YGEHSWRFRL…PTAHTSGRRH (260 aa). The region spanning 98–166 is the POTRA domain; that stretch reads ESSDSIEVGG…DRIRVQVTER (69 aa). Residues 308 to 347 are disordered; that stretch reads DSHPSAAKPTAPAVAPAVEKPAVAKPAVAKPTAHTSGRRH. The segment covering 313-340 has biased composition (low complexity); the sequence is AAKPTAPAVAPAVEKPAVAKPAVAKPTA.

It belongs to the FtsQ/DivIB family. FtsQ subfamily.

The protein resides in the cell inner membrane. Essential cell division protein. This chain is Cell division protein FtsQ, found in Koribacter versatilis (strain Ellin345).